The primary structure comprises 365 residues: Transcription factor KUA1 (365 aa).

Residues 1–21 (MTRRCSHCNHNGHNSRTCPNR) form a disordered region. A CCHC-type zinc finger spans residues 3-20 (RRCSHCNHNGHNSRTCPN). Residues 8–18 (CNHNGHNSRTC) show a composition bias toward polar residues. Residues 24–28 (KLFGV) carry the R/KLFGV (transcriptional repression) motif. The tract at residues 41-99 (MGNLSHYTGSGSGGHGTGSNTPGSPGDVPDHVAGDGYASEDFVAGSSSSRERKKGTPWT) is disordered. The HTH myb-type domain occupies 90–146 (RERKKGTPWTEEEHRMFLLGLQKLGKGDWRGISRNYVTTRTPTQVASHAQKYFIRQS). A DNA-binding region (H-T-H motif) is located at residues 118 to 142 (WRGISRNYVTTRTPTQVASHAQKYF). Disordered regions lie at residues 214 to 254 (SMDS…QPQL) and 321 to 365 (ESNK…IHAL). Residues 220-254 (STTGEPTATAAAASSSSRLEETTQLQSQLQPQPQL) are compositionally biased toward low complexity. Polar residues predominate over residues 343 to 355 (RQSAFHPNPSSDS).

As to expression, expressed ubiquitously, except in hypocotyls, root tips and lateral root primordia.

It localises to the nucleus. In terms of biological role, transcriptional repressor. Direct regulator of the transcription of peroxidase (Prxs) and reactive oxygen species (ROS)-related genes via the recognition of 5'-ATCACA-3' motif. Binds to 5'-TATCCA-3' motif (TA box) and represses the activity of corresponding promoters (e.g. sugar response genes). Regulates hypocotyl elongation in response to darkness by enhancing auxin accumulation in a phytochrome-interacting factor (PIF) proteins-dependent manner. Promotes lateral roots formation. Promotes cell expansion during leaves development via the modulation of cell wall-located Prxs. Plays a critical role in developmentally regulated and dark-induced onset of leaf senescence by repressing the transcription of several genes involved in chloroplast function and responses to light and auxin. Promotes responses to auxin, abscisic acid (ABA), and ethylene. This chain is Transcription factor KUA1, found in Arabidopsis thaliana (Mouse-ear cress).